We begin with the raw amino-acid sequence, 372 residues long: Cyclin-J (372 aa).

Positions 15 to 143 (DIHQALRYKE…LLETFQWNLC (129 aa)) constitute a Cyclin N-terminal domain.

Belongs to the cyclin family.

The chain is Cyclin-J (CCNJ) from Homo sapiens (Human).